A 134-amino-acid chain; its full sequence is MILACDVGLKRIGIAALLNGVILPLEAILRHNRNQASRDLSDLLRKKDIQVLVVGKPNESYADTHARIEHFIKLVDFKGEIVFINEDNSSVEAYENLEHLGKKNKRIATKDGRLDSLSACRILERYCQQVLKKG.

The protein belongs to the YqgF nuclease family.

Its subcellular location is the cytoplasm. Its function is as follows. Could be a nuclease involved in processing of the 5'-end of pre-16S rRNA. The chain is Putative pre-16S rRNA nuclease from Helicobacter pylori (strain J99 / ATCC 700824) (Campylobacter pylori J99).